The following is a 330-amino-acid chain: ADP-L-glycero-D-manno-heptose-6-epimerase (330 aa).

NADP(+) contacts are provided by residues 11-12, 32-33, K39, K54, 75-79, and N92; these read FI, DN, and EGACS. Y139 acts as the Proton acceptor in catalysis. Position 143 (K143) interacts with NADP(+). Residue N168 participates in substrate binding. Positions 169 and 177 each coordinate NADP(+). Residue K177 is the Proton acceptor of the active site. Substrate-binding positions include R179, H186, 200–203, R213, and Y292; that span reads FGEY.

It belongs to the NAD(P)-dependent epimerase/dehydratase family. HldD subfamily. Homopentamer. The cofactor is NADP(+).

It carries out the reaction ADP-D-glycero-beta-D-manno-heptose = ADP-L-glycero-beta-D-manno-heptose. The protein operates within nucleotide-sugar biosynthesis; ADP-L-glycero-beta-D-manno-heptose biosynthesis; ADP-L-glycero-beta-D-manno-heptose from D-glycero-beta-D-manno-heptose 7-phosphate: step 4/4. In terms of biological role, catalyzes the interconversion between ADP-D-glycero-beta-D-manno-heptose and ADP-L-glycero-beta-D-manno-heptose via an epimerization at carbon 6 of the heptose. This chain is ADP-L-glycero-D-manno-heptose-6-epimerase, found in Burkholderia pseudomallei (strain 1026b).